The chain runs to 324 residues: MSELKSRIGNSGSIANSGPVSILCYCASSILMTVTNKFVVNTDGFNMFFVMLFAQSLVCTMCLMVLKMFGYAKYRPLNLIDVKNWLPISFLLVFMIFTSAKALKYMPVPIYTIFKNLTIILIAYGEVLFFGGSVTPMELSSFILMVLSSVVASLGDQQAAKIAQPLANNSILSPEYYWMFLNCICSASFVLIMRKRIKLTNFKDYDTMFYNNALALPILLGFSFLSEDWSSENLAQNFSGESLSAMIISGMTSVGISYCSGWCVRATSSTTYSMVGALNKLPIALAGLIFFDAPRNFLSIMSIFIGFASGLSYAVAKQKKVQKN.

Over 1–13 the chain is Cytoplasmic; it reads MSELKSRIGNSGS. Residues 14-34 form a helical membrane-spanning segment; it reads IANSGPVSILCYCASSILMTV. The Lumenal portion of the chain corresponds to 35 to 44; that stretch reads TNKFVVNTDG. A helical transmembrane segment spans residues 45–65; it reads FNMFFVMLFAQSLVCTMCLMV. Over 66 to 76 the chain is Cytoplasmic; sequence LKMFGYAKYRP. The helical transmembrane segment at 77–97 threads the bilayer; that stretch reads LNLIDVKNWLPISFLLVFMIF. Residues 98 to 116 are Lumenal-facing; sequence TSAKALKYMPVPIYTIFKN. A glycan (N-linked (GlcNAc...) asparagine) is linked at N116. The helical transmembrane segment at 117 to 137 threads the bilayer; that stretch reads LTIILIAYGEVLFFGGSVTPM. Position 138 (E138) is a topological domain, cytoplasmic. A helical membrane pass occupies residues 139–159; the sequence is LSSFILMVLSSVVASLGDQQA. Over 160 to 170 the chain is Lumenal; that stretch reads AKIAQPLANNS. N168 is a glycosylation site (N-linked (GlcNAc...) asparagine). The helical transmembrane segment at 171–191 threads the bilayer; that stretch reads ILSPEYYWMFLNCICSASFVL. Residues 192 to 204 lie on the Cytoplasmic side of the membrane; the sequence is IMRKRIKLTNFKD. Residues 205 to 225 form a helical membrane-spanning segment; it reads YDTMFYNNALALPILLGFSFL. At 226 to 243 the chain is on the lumenal side; the sequence is SEDWSSENLAQNFSGESL. Residue N237 is glycosylated (N-linked (GlcNAc...) asparagine). Residues 244–264 form a helical membrane-spanning segment; the sequence is SAMIISGMTSVGISYCSGWCV. At 265–270 the chain is on the cytoplasmic side; that stretch reads RATSST. Residues 271 to 291 traverse the membrane as a helical segment; it reads TYSMVGALNKLPIALAGLIFF. Residues 292–295 are Lumenal-facing; that stretch reads DAPR. The chain crosses the membrane as a helical span at residues 296–316; the sequence is NFLSIMSIFIGFASGLSYAVA. Over 317-324 the chain is Cytoplasmic; it reads KQKKVQKN.

The protein belongs to the TPT transporter family. SLC35D subfamily. As to quaternary structure, homooligomer.

It localises to the golgi apparatus membrane. The protein localises to the cytoplasmic vesicle membrane. Its subcellular location is the endoplasmic reticulum membrane. In terms of biological role, involved in the import of GDP-mannose from the cytoplasm into the Golgi lumen. This chain is GDP-mannose transporter (VRG4), found in Candida glabrata (strain ATCC 2001 / BCRC 20586 / JCM 3761 / NBRC 0622 / NRRL Y-65 / CBS 138) (Yeast).